A 72-amino-acid polypeptide reads, in one-letter code: ATP-dependent Clp protease ATP-binding subunit ClpA homolog (72 aa).

It belongs to the ClpA/ClpB family.

The protein localises to the plastid. It localises to the chloroplast. Functionally, may interact with a ClpP-like protease involved in degradation of denatured proteins in the chloroplast. In Populus euphratica (Euphrates poplar), this protein is ATP-dependent Clp protease ATP-binding subunit ClpA homolog.